The primary structure comprises 213 residues: dITP/XTP pyrophosphatase (213 aa).

Residue 7-12 (TSNLDK) coordinates substrate. Asp-74 functions as the Proton acceptor in the catalytic mechanism. Asp-74 lines the Mg(2+) pocket. Substrate contacts are provided by residues Ser-75, 165 to 168 (FGYD), Lys-188, and 193 to 194 (HR).

It belongs to the HAM1 NTPase family. As to quaternary structure, homodimer. It depends on Mg(2+) as a cofactor.

It carries out the reaction XTP + H2O = XMP + diphosphate + H(+). It catalyses the reaction dITP + H2O = dIMP + diphosphate + H(+). The enzyme catalyses ITP + H2O = IMP + diphosphate + H(+). Its function is as follows. Pyrophosphatase that catalyzes the hydrolysis of nucleoside triphosphates to their monophosphate derivatives, with a high preference for the non-canonical purine nucleotides XTP (xanthosine triphosphate), dITP (deoxyinosine triphosphate) and ITP. Seems to function as a house-cleaning enzyme that removes non-canonical purine nucleotides from the nucleotide pool, thus preventing their incorporation into DNA/RNA and avoiding chromosomal lesions. This chain is dITP/XTP pyrophosphatase, found in Campylobacter concisus (strain 13826).